We begin with the raw amino-acid sequence, 137 residues long: Protein Flattop homolog (137 aa).

Belongs to the Flattop family.

The protein localises to the cytoplasm. The protein resides in the cytoskeleton. It localises to the flagellum axoneme. Functionally, microtubule inner protein (MIP) part of the dynein-decorated doublet microtubules (DMTs) in cilia axoneme. Acts as a regulator of cilium basal body docking and positioning in mono- and multiciliated cells. Regulates basal body docking and cilia formation in multiciliated lung cells. Regulates kinocilium positioning and stereocilia bundle morphogenesis in the inner ear. In Chlamydomonas reinhardtii (Chlamydomonas smithii), this protein is Protein Flattop homolog.